The following is a 184-amino-acid chain: ATP synthase subunit b (184 aa).

Residues 19–39 form a helical membrane-spanning segment; it reads IIVGVILVLLLTWLIAKAVVP.

This sequence belongs to the ATPase B chain family. In terms of assembly, F-type ATPases have 2 components, F(1) - the catalytic core - and F(0) - the membrane proton channel. F(1) has five subunits: alpha(3), beta(3), gamma(1), delta(1), epsilon(1). F(0) has three main subunits: a(1), b(2) and c(10-14). The alpha and beta chains form an alternating ring which encloses part of the gamma chain. F(1) is attached to F(0) by a central stalk formed by the gamma and epsilon chains, while a peripheral stalk is formed by the delta and b chains.

It localises to the cell membrane. Functionally, f(1)F(0) ATP synthase produces ATP from ADP in the presence of a proton or sodium gradient. F-type ATPases consist of two structural domains, F(1) containing the extramembraneous catalytic core and F(0) containing the membrane proton channel, linked together by a central stalk and a peripheral stalk. During catalysis, ATP synthesis in the catalytic domain of F(1) is coupled via a rotary mechanism of the central stalk subunits to proton translocation. Its function is as follows. Component of the F(0) channel, it forms part of the peripheral stalk, linking F(1) to F(0). In Cutibacterium acnes (strain DSM 16379 / KPA171202) (Propionibacterium acnes), this protein is ATP synthase subunit b.